We begin with the raw amino-acid sequence, 684 residues long: Macrolide export ATP-binding/permease protein MacB (684 aa).

Residues 2-243 form the ABC transporter domain; the sequence is IQLYGLRKDY…RSRLANSRAE (242 aa). An ATP-binding site is contributed by 38–45; the sequence is GSSGSGKT. 5 helical membrane-spanning segments follow: residues 248-268, 275-295, 563-583, 615-635, and 644-664; these read PASA…VLAL, TVLT…TMEL, LVIA…IMLV, VLCV…SVLV, and AMSI…GIVF.

The protein belongs to the ABC transporter superfamily. Macrolide exporter (TC 3.A.1.122) family. Homodimer.

The protein localises to the cell inner membrane. Its function is as follows. Non-canonical ABC transporter that contains transmembrane domains (TMD), which form a pore in the inner membrane, and an ATP-binding domain (NBD), which is responsible for energy generation. Confers resistance against macrolides. The chain is Macrolide export ATP-binding/permease protein MacB from Rhodopirellula baltica (strain DSM 10527 / NCIMB 13988 / SH1).